The primary structure comprises 93 residues: Pyrimidine/purine nucleoside phosphorylase (93 aa).

It belongs to the nucleoside phosphorylase PpnP family.

It carries out the reaction a purine D-ribonucleoside + phosphate = a purine nucleobase + alpha-D-ribose 1-phosphate. The enzyme catalyses adenosine + phosphate = alpha-D-ribose 1-phosphate + adenine. The catalysed reaction is cytidine + phosphate = cytosine + alpha-D-ribose 1-phosphate. It catalyses the reaction guanosine + phosphate = alpha-D-ribose 1-phosphate + guanine. It carries out the reaction inosine + phosphate = alpha-D-ribose 1-phosphate + hypoxanthine. The enzyme catalyses thymidine + phosphate = 2-deoxy-alpha-D-ribose 1-phosphate + thymine. The catalysed reaction is uridine + phosphate = alpha-D-ribose 1-phosphate + uracil. It catalyses the reaction xanthosine + phosphate = alpha-D-ribose 1-phosphate + xanthine. Catalyzes the phosphorolysis of diverse nucleosides, yielding D-ribose 1-phosphate and the respective free bases. Can use uridine, adenosine, guanosine, cytidine, thymidine, inosine and xanthosine as substrates. Also catalyzes the reverse reactions. This Pseudomonas aeruginosa (strain LESB58) protein is Pyrimidine/purine nucleoside phosphorylase.